We begin with the raw amino-acid sequence, 901 residues long: Probable inorganic carbon transporter subunit DabA (901 aa).

Positions 424, 426, 606, and 621 each coordinate Zn(2+).

It belongs to the inorganic carbon transporter (TC 9.A.2) DabA family. Forms a complex with DabB. The cofactor is Zn(2+).

It is found in the cell membrane. Its function is as follows. Part of an energy-coupled inorganic carbon pump. The protein is Probable inorganic carbon transporter subunit DabA of Staphylococcus aureus (strain NCTC 8325 / PS 47).